Here is a 290-residue protein sequence, read N- to C-terminus: Phosphatidylglycerol--prolipoprotein diacylglyceryl transferase (290 aa).

7 consecutive transmembrane segments (helical) span residues 21–41 (VSLH…MWLA), 60–80 (LLYA…VLFY), 96–116 (WDGG…MLWF), 124–144 (FFQV…AGRL), 199–219 (SQLY…NVFI), 226–246 (GSVS…VECF), and 260–280 (ISMG…MMIW). Residue Arg-143 coordinates a 1,2-diacyl-sn-glycero-3-phospho-(1'-sn-glycerol).

This sequence belongs to the Lgt family.

Its subcellular location is the cell inner membrane. The catalysed reaction is L-cysteinyl-[prolipoprotein] + a 1,2-diacyl-sn-glycero-3-phospho-(1'-sn-glycerol) = an S-1,2-diacyl-sn-glyceryl-L-cysteinyl-[prolipoprotein] + sn-glycerol 1-phosphate + H(+). The protein operates within protein modification; lipoprotein biosynthesis (diacylglyceryl transfer). Its function is as follows. Catalyzes the transfer of the diacylglyceryl group from phosphatidylglycerol to the sulfhydryl group of the N-terminal cysteine of a prolipoprotein, the first step in the formation of mature lipoproteins. The polypeptide is Phosphatidylglycerol--prolipoprotein diacylglyceryl transferase (Yersinia pseudotuberculosis serotype O:1b (strain IP 31758)).